A 462-amino-acid polypeptide reads, in one-letter code: Glycoprotein endo-alpha-1,2-mannosidase (462 aa).

The Cytoplasmic portion of the chain corresponds to 1–9; the sequence is MAKFRRRTC. A helical; Signal-anchor for type II membrane protein transmembrane segment spans residues 10–30; that stretch reads IILSLFIVFIFSLMMGLKMLW. Over 31 to 462 the chain is Lumenal; sequence PNAASFGPPF…YALDQQLPAS (432 aa). The tract at residues 60-462 is catalytic; that stretch reads DFQRSDRIDM…YALDQQLPAS (403 aa).

Belongs to the glycosyl hydrolase 99 family. In terms of processing, undergoes proteolytic cleavage in the C-terminal region. In terms of tissue distribution, highly expressed in the liver and kidney.

It localises to the golgi apparatus membrane. It carries out the reaction N-{alpha-Glc-(1-&gt;3)-alpha-Man-(1-&gt;2)-alpha-Man-(1-&gt;2)-alpha-Man-(1-&gt;3)-[alpha-Man-(1-&gt;2)-alpha-Man-(1-&gt;3)-[alpha-Man-(1-&gt;2)-alpha-Man-(1-&gt;6)]-alpha-Man-(1-&gt;6)]-beta-Man-(1-&gt;4)-beta-GlcNAc-(1-&gt;4)-beta-GlcNAc}-L-asparaginyl-[protein] + H2O = alpha-D-glucosyl-(1-&gt;3)-D-mannopyranose + N(4)-{alpha-D-Man-(1-&gt;2)-alpha-D-Man-(1-&gt;3)-[alpha-D-Man-(1-&gt;2)-alpha-D-Man-(1-&gt;3)-[alpha-D-Man-(1-&gt;2)-alpha-D-Man-(1-&gt;6)]-alpha-D-Man-(1-&gt;6)]-beta-D-Man-(1-&gt;4)-beta-D-GlaNAc-(1-&gt;4)-beta-D-GlcNAc}-L-asparaginyl-[protein] (N-glucan mannose isomer 8A1,2,3B1,2). In Rattus norvegicus (Rat), this protein is Glycoprotein endo-alpha-1,2-mannosidase (Manea).